The sequence spans 133 residues: Small ribosomal subunit protein uS8 (133 aa).

Belongs to the universal ribosomal protein uS8 family. As to quaternary structure, part of the 30S ribosomal subunit. Contacts proteins S5 and S12.

In terms of biological role, one of the primary rRNA binding proteins, it binds directly to 16S rRNA central domain where it helps coordinate assembly of the platform of the 30S subunit. This is Small ribosomal subunit protein uS8 from Rhodopirellula baltica (strain DSM 10527 / NCIMB 13988 / SH1).